The sequence spans 347 residues: UDP-N-acetylenolpyruvoylglucosamine reductase (347 aa).

An FAD-binding PCMH-type domain is found at 16-187 (AIEQCSHYLV…IAVGLKLPKT (172 aa)). Residue Arg163 is part of the active site. Ser233 functions as the Proton donor in the catalytic mechanism. Residue Glu328 is part of the active site.

Belongs to the MurB family. FAD is required as a cofactor.

It is found in the cytoplasm. The enzyme catalyses UDP-N-acetyl-alpha-D-muramate + NADP(+) = UDP-N-acetyl-3-O-(1-carboxyvinyl)-alpha-D-glucosamine + NADPH + H(+). It functions in the pathway cell wall biogenesis; peptidoglycan biosynthesis. In terms of biological role, cell wall formation. The polypeptide is UDP-N-acetylenolpyruvoylglucosamine reductase (Vibrio vulnificus (strain YJ016)).